The chain runs to 450 residues: Glutathione reductase (450 aa).

Residues S14, G15, E34, T41, C42, and K50 each contribute to the FAD site. S14 provides a ligand contact to glutathione. C42 and C47 are disulfide-bonded. Y99 contributes to the glutathione binding site. A115 is an FAD binding site. A175, I178, E181, R198, R204, and G262 together coordinate NADP(+). D303 is an FAD binding site. E309 is a binding site for NADP(+). FAD is bound at residue T311. R319 contributes to the glutathione binding site. V342 contributes to the NADP(+) binding site. Residue H439 participates in FAD binding. H439 functions as the Proton acceptor in the catalytic mechanism.

This sequence belongs to the class-I pyridine nucleotide-disulfide oxidoreductase family. In terms of assembly, homodimer. It depends on FAD as a cofactor.

Its subcellular location is the cytoplasm. It carries out the reaction 2 glutathione + NADP(+) = glutathione disulfide + NADPH + H(+). In terms of biological role, catalyzes the reduction of glutathione disulfide (GSSG) to reduced glutathione (GSH). Constitutes the major mechanism to maintain a high GSH:GSSG ratio in the cytosol. In Escherichia coli (strain K12), this protein is Glutathione reductase (gor).